The following is a 290-amino-acid chain: PIH1 domain-containing protein 1 (290 aa).

Phosphoserine is present on residues Ser-12, Ser-16, and Ser-173.

Belongs to the PIH1 family. In terms of assembly, component of the R2TP complex composed at least of RUVBL1, RUVBL2, RPAP3 and PIHD1. Component of the PAQosome complex which is responsible for the biogenesis of several protein complexes and which consists of R2TP complex members RUVBL1, RUVBL2, RPAP3 and PIH1D1, URI complex members PFDN2, PFDN6, PDRG1, UXT and URI1 as well as ASDURF, POLR2E and DNAAF10/WDR92. Interacts with phosphorylated TELO2. Mediates interaction of TELO2 with the R2TP complex. Interacts with phosphorylated ECD, EFTUD2/SNRP116, RPB1 and UBR5 and with RPB1 in a phosphorylation-independent manner. Interacts with the core C/D box snoRNP particle components NOP58 and FBL and with RUVBL1/TIP49. Interacts with RPAP3 and DNAAF10. Interacts with histone H4 and with SWI/SNF complex member SMARCB1/SNF5. Interacts with the mTORC1 complex member RPTOR. Interacts with isoform 1 of MSL1.

It is found in the nucleus. Its function is as follows. Involved in the assembly of C/D box small nucleolar ribonucleoprotein (snoRNP) particles. Recruits the SWI/SNF complex to the core promoter of rRNA genes and enhances pre-rRNA transcription. Mediates interaction of TELO2 with the R2TP complex which is necessary for the stability of MTOR and SMG1. Positively regulates the assembly and activity of the mTORC1 complex. This Mus musculus (Mouse) protein is PIH1 domain-containing protein 1 (Pih1d1).